Here is an 875-residue protein sequence, read N- to C-terminus: Neurotrypsin (875 aa).

The signal sequence occupies residues 1–20 (MTLARFVLALVLGALPEVVX). N-linked (GlcNAc...) asparagine glycosylation is present at asparagine 26. The tract at residues 31-88 (HRPRHSPPTGPHYPYYLPTQQRPPRTRPPPPLPRFPRPPRALPAQRPHALQAGHTPRP) is disordered. Pro residues predominate over residues 56-71 (TRPPPPLPRFPRPPRA). In terms of domain architecture, Kringle spans 93–165 (CPAGEPWVSV…GKVDWGYCDC (73 aa)). 20 disulfides stabilise this stretch: cysteine 93-cysteine 165, cysteine 109-cysteine 149, cysteine 138-cysteine 163, cysteine 195-cysteine 259, cysteine 208-cysteine 269, cysteine 239-cysteine 249, cysteine 305-cysteine 369, cysteine 318-cysteine 379, cysteine 349-cysteine 359, cysteine 412-cysteine 475, cysteine 425-cysteine 485, cysteine 455-cysteine 465, cysteine 525-cysteine 589, cysteine 538-cysteine 599, cysteine 569-cysteine 579, cysteine 619-cysteine 750, cysteine 661-cysteine 677, cysteine 765-cysteine 831, cysteine 794-cysteine 808, and cysteine 821-cysteine 850. SRCR domains lie at 170–271 (IRLR…TCSF), 280–381 (IRLV…SCTP), 387–487 (IRLA…ACYP), and 500–601 (VRLM…ICDY). Residues 619 to 630 (CGLRLLHRRQKR) form a zymogen activation region region. The Peptidase S1 domain occupies 631–874 (IIGGKNSLRG…FVPWIKSVTK (244 aa)). The active-site Charge relay system is the histidine 676. N-linked (GlcNAc...) asparagine glycosylation occurs at asparagine 683. The active-site Charge relay system is the aspartate 726. Catalysis depends on serine 825, which acts as the Charge relay system.

The protein belongs to the peptidase S1 family.

It is found in the secreted. Functionally, plays a role in neuronal plasticity and the proteolytic action may subserve structural reorganizations associated with learning and memory operations. This is Neurotrypsin (PRSS12) from Nomascus leucogenys (Northern white-cheeked gibbon).